The following is a 1664-amino-acid chain: DNA-directed RNA polymerase I subunit RPA190 (1664 aa).

Zn(2+) is bound by residues cysteine 62, cysteine 65, cysteine 72, histidine 75, cysteine 102, cysteine 105, cysteine 233, and cysteine 236. A disordered region spans residues 280–310; the sequence is QAKKLDGSNEASANDEESFDVGRNPTTRPKT. Positions 627, 629, and 631 each coordinate Mg(2+). Serine 889 carries the post-translational modification Phosphoserine. The interval 992-1004 is bridging helix; the sequence is PQEYYFHCMAGRE. The disordered stretch occupies residues 1343–1423; it reads DIGVAVPRLQ…DSDSEDEDVD (81 aa). Over residues 1393 to 1414 the composition is skewed to basic and acidic residues; it reads ETMREAEKSSDEEGIDSDKESD. Serine 1636 is subject to Phosphoserine.

The protein belongs to the RNA polymerase beta' chain family. In terms of assembly, component of the RNA polymerase I (Pol I) complex consisting of 14 subunits: RPA135, RPA190, RPC40, RPA14, RPB5, RPO26, RPA43, RPB8, RPA12, RPB10, RPC19, RPC10, RPA49 and RPA34. The complex is composed of a horseshoe-shaped core containing ten subunits (RPA135, RPA190, RPB5, RPO26, RPB8, RPB10, RPC10, RPA12, RPC19 and RPC40) where RPA135 and RPA190 form the DNA-binding cleft. Outside of the core, RPA14 and RPA43 form the stalk that mediates interactions with transcription initiation factors and newly synthesized RNA.

The protein resides in the nucleus. Its subcellular location is the nucleolus. The catalysed reaction is RNA(n) + a ribonucleoside 5'-triphosphate = RNA(n+1) + diphosphate. Functionally, DNA-dependent RNA polymerases catalyze the transcription of DNA into RNA using the four ribonucleoside triphosphates as substrates. Component of RNA polymerase I (Pol I) which synthesizes ribosomal RNA precursors. Besides, RNA polymerase I has intrinsic RNA cleavage activity. RPA190 and RPA135 both contribute to the polymerase catalytic activity and together form the Pol I active center. In addition, subunit RPA12 contributes a catalytic zinc ribbon that is required for RNA cleavage by Pol I. A single stranded DNA template strand of the promoter is positioned within the central active site cleft of Pol I. A bridging helix emanates from RPA190 and crosses the cleft near the catalytic site and is thought to promote translocation of Pol I by acting as a ratchet that moves the RNA-DNA hybrid through the active site by switching from straight to bent conformations at each step of nucleotide addition. The chain is DNA-directed RNA polymerase I subunit RPA190 (RPA190) from Saccharomyces cerevisiae (strain ATCC 204508 / S288c) (Baker's yeast).